The chain runs to 121 residues: Small ribosomal subunit protein uS13 (121 aa).

The disordered stretch occupies residues 90–121 (RHRHGLPVRGQHTKNNARTRKGKAVAIAGKKK).

It belongs to the universal ribosomal protein uS13 family. As to quaternary structure, part of the 30S ribosomal subunit. Forms a loose heterodimer with protein S19. Forms two bridges to the 50S subunit in the 70S ribosome.

Functionally, located at the top of the head of the 30S subunit, it contacts several helices of the 16S rRNA. In the 70S ribosome it contacts the 23S rRNA (bridge B1a) and protein L5 of the 50S subunit (bridge B1b), connecting the 2 subunits; these bridges are implicated in subunit movement. Contacts the tRNAs in the A and P-sites. In Limosilactobacillus fermentum (strain NBRC 3956 / LMG 18251) (Lactobacillus fermentum), this protein is Small ribosomal subunit protein uS13.